The following is a 373-amino-acid chain: Peptide chain release factor 2 (373 aa).

N5-methylglutamine is present on Gln-251.

This sequence belongs to the prokaryotic/mitochondrial release factor family. Methylated by PrmC. Methylation increases the termination efficiency of RF2.

The protein localises to the cytoplasm. Its function is as follows. Peptide chain release factor 2 directs the termination of translation in response to the peptide chain termination codons UGA and UAA. In Salinispora tropica (strain ATCC BAA-916 / DSM 44818 / JCM 13857 / NBRC 105044 / CNB-440), this protein is Peptide chain release factor 2.